A 468-amino-acid chain; its full sequence is Acetyl-CoA decarbonylase/synthase complex subunit gamma 1 (468 aa).

In terms of domain architecture, 4Fe-4S spans 1 to 61 (MKINSPLEAY…YAKKLAELDR (61 aa)). The [4Fe-4S] cluster site is built by Cys-18, Cys-21, Cys-26, and Cys-43.

Heterodimer of delta and gamma chains. The ACDS complex is made up of alpha, epsilon, beta, gamma and delta chains with a probable stoichiometry of (alpha(2)epsilon(2))(4)-beta(8)-(gamma(1)delta(1))(8). It depends on corrinoid as a cofactor. [4Fe-4S] cluster serves as cofactor.

It catalyses the reaction 5,6,7,8-tetrahydrosarcinapterin + methyl-Co(III)-[corrinoid Fe-S protein] = 5-methyltetrahydrosarcinapterin + Co(I)-[corrinoid Fe-S protein] + H(+). It functions in the pathway one-carbon metabolism; methanogenesis from acetate. Its function is as follows. Part of a complex that catalyzes the reversible cleavage of acetyl-CoA, allowing growth on acetate as sole source of carbon and energy. The polypeptide is Acetyl-CoA decarbonylase/synthase complex subunit gamma 1 (Methanosarcina thermophila).